Here is a 374-residue protein sequence, read N- to C-terminus: MDKGIILLAAGGTGGHLFPAEALAHELKATGYSVHLVTDSRAERFTGKFPADEIHVVPSATIGSKNPVKLARSVWKLWTGLRAARRLIARLKPRAVVGFGGYPTVPPLLAATGMGIPSIIHEQNAVMGRANKMLASRVKAVAGGFLPEGTGAFAAKTVATGNPVRPAVLKAAGVPYAPAAGDAPFHLVVFGGSQGAQFFSKAVPQAVCRLDDALRQRLKVTQQARPEDREGVIAVYEKLGVPAEVSPFFTDMAGRIASAQLLICRSGASTVSEISVIGRPAILVPYPYALDHDQAANAAALAAKGGARVIAQVELSAERLAGILADAMSNPDALAQMAAGARQTGKPDAARLLALLVEAIASGSTVAKFKETRS.

Residues 13-15 (TGG), asparagine 124, arginine 165, serine 193, and glutamine 294 each bind UDP-N-acetyl-alpha-D-glucosamine.

This sequence belongs to the glycosyltransferase 28 family. MurG subfamily.

The protein localises to the cell inner membrane. The catalysed reaction is di-trans,octa-cis-undecaprenyl diphospho-N-acetyl-alpha-D-muramoyl-L-alanyl-D-glutamyl-meso-2,6-diaminopimeloyl-D-alanyl-D-alanine + UDP-N-acetyl-alpha-D-glucosamine = di-trans,octa-cis-undecaprenyl diphospho-[N-acetyl-alpha-D-glucosaminyl-(1-&gt;4)]-N-acetyl-alpha-D-muramoyl-L-alanyl-D-glutamyl-meso-2,6-diaminopimeloyl-D-alanyl-D-alanine + UDP + H(+). The protein operates within cell wall biogenesis; peptidoglycan biosynthesis. Cell wall formation. Catalyzes the transfer of a GlcNAc subunit on undecaprenyl-pyrophosphoryl-MurNAc-pentapeptide (lipid intermediate I) to form undecaprenyl-pyrophosphoryl-MurNAc-(pentapeptide)GlcNAc (lipid intermediate II). This is UDP-N-acetylglucosamine--N-acetylmuramyl-(pentapeptide) pyrophosphoryl-undecaprenol N-acetylglucosamine transferase from Rhizobium meliloti (strain 1021) (Ensifer meliloti).